The primary structure comprises 418 residues: NADH-quinone oxidoreductase subunit D (418 aa).

It belongs to the complex I 49 kDa subunit family. NDH-1 is composed of 14 different subunits. Subunits NuoB, C, D, E, F, and G constitute the peripheral sector of the complex.

The protein localises to the cell inner membrane. The catalysed reaction is a quinone + NADH + 5 H(+)(in) = a quinol + NAD(+) + 4 H(+)(out). NDH-1 shuttles electrons from NADH, via FMN and iron-sulfur (Fe-S) centers, to quinones in the respiratory chain. The immediate electron acceptor for the enzyme in this species is believed to be ubiquinone. Couples the redox reaction to proton translocation (for every two electrons transferred, four hydrogen ions are translocated across the cytoplasmic membrane), and thus conserves the redox energy in a proton gradient. This Methylacidiphilum infernorum (isolate V4) (Methylokorus infernorum (strain V4)) protein is NADH-quinone oxidoreductase subunit D.